The chain runs to 219 residues: 2-C-methyl-D-erythritol 4-phosphate cytidylyltransferase (219 aa).

Belongs to the IspD/TarI cytidylyltransferase family. IspD subfamily.

The enzyme catalyses 2-C-methyl-D-erythritol 4-phosphate + CTP + H(+) = 4-CDP-2-C-methyl-D-erythritol + diphosphate. It functions in the pathway isoprenoid biosynthesis; isopentenyl diphosphate biosynthesis via DXP pathway; isopentenyl diphosphate from 1-deoxy-D-xylulose 5-phosphate: step 2/6. Its function is as follows. Catalyzes the formation of 4-diphosphocytidyl-2-C-methyl-D-erythritol from CTP and 2-C-methyl-D-erythritol 4-phosphate (MEP). The sequence is that of 2-C-methyl-D-erythritol 4-phosphate cytidylyltransferase from Bacteroides fragilis (strain ATCC 25285 / DSM 2151 / CCUG 4856 / JCM 11019 / LMG 10263 / NCTC 9343 / Onslow / VPI 2553 / EN-2).